An 89-amino-acid polypeptide reads, in one-letter code: Small ribosomal subunit protein uS17 (89 aa).

The protein belongs to the universal ribosomal protein uS17 family. Part of the 30S ribosomal subunit.

One of the primary rRNA binding proteins, it binds specifically to the 5'-end of 16S ribosomal RNA. The protein is Small ribosomal subunit protein uS17 of Baumannia cicadellinicola subsp. Homalodisca coagulata.